The sequence spans 469 residues: Glutamine synthetase (469 aa).

Positions 13–97 (KEVRYVDLRF…LRCDIVEPAT (85 aa)) constitute a GS beta-grasp domain. The GS catalytic domain occupies 105 to 469 (PRSIAKRAEA…PVEFDMYYSL (365 aa)). Residues glutamate 130 and glutamate 132 each coordinate Mg(2+). Position 208 (glutamate 208) interacts with ATP. Mg(2+) is bound by residues glutamate 213 and glutamate 221. L-glutamate-binding positions include 265–266 (NG) and glycine 266. Histidine 270 is a binding site for Mg(2+). Residues 272 to 274 (HQS) and serine 274 contribute to the ATP site. The L-glutamate site is built by arginine 322, glutamate 328, and arginine 340. ATP contacts are provided by arginine 340, arginine 345, and lysine 353. Residue glutamate 358 coordinates Mg(2+). Arginine 360 serves as a coordination point for L-glutamate. Tyrosine 398 is subject to O-AMP-tyrosine.

Belongs to the glutamine synthetase family. In terms of assembly, oligomer of 12 subunits arranged in the form of two hexameric ring. It depends on Mg(2+) as a cofactor.

Its subcellular location is the cytoplasm. It catalyses the reaction L-glutamate + NH4(+) + ATP = L-glutamine + ADP + phosphate + H(+). With respect to regulation, the activity of this enzyme could be controlled by adenylation under conditions of abundant glutamine. Catalyzes the ATP-dependent biosynthesis of glutamine from glutamate and ammonia. The chain is Glutamine synthetase from Methylococcus capsulatus (strain ATCC 33009 / NCIMB 11132 / Bath).